A 473-amino-acid chain; its full sequence is FAD-dependent oxidoreductase dpchF (473 aa).

An N-terminal signal peptide occupies residues 1–21 (MKLSFIASPVWALALAQFAAA). Asn98, Asn128, Asn181, Asn262, and Asn330 each carry an N-linked (GlcNAc...) asparagine glycan.

Belongs to the beta-cyclopiazonate dehydrogenase family. FAD is required as a cofactor.

It functions in the pathway secondary metabolite biosynthesis; terpenoid biosynthesis. In terms of biological role, FAD-dependent oxidoreductase; part of the gene cluster that mediates the biosynthesis of the diterpenoid pyrones higginsianins A and B. The first step of the pathway is the synthesis of the alpha-pyrone moiety by the polyketide synthase dpchA via condensation of one acetyl-CoA starter unit with 3 malonyl-CoA units and 2 methylations. The alpha-pyrone is then combined with geranylgeranyl pyrophosphate (GGPP) formed by the GGPP synthase dpchD through the action of the prenyltransferase dpchC to yield a linear alpha-pyrone diterpenoid. Subsequent steps in the diterpenoid pyrone biosynthetic pathway involve the decalin core formation, which is initiated by the epoxidation of the C10-C11 olefin by the FAD-dependent oxidoreductase dpchE, and is followed by a cyclization cascade catalyzed by the terpene cyclase dpchB. The short chain dehydrogenase/reductase dpchG then oxidizes the 8S hydroxy group to a ketone and the short chain dehydrogenase/reductase dpchH reduces the ketone to the 8R hydroxy group to yield higginsianin B. Finally, the FAD-dependent oxidoreductase dpchF converts higginsianin B into higginsianin A. The protein is FAD-dependent oxidoreductase dpchF of Colletotrichum higginsianum (strain IMI 349063) (Crucifer anthracnose fungus).